We begin with the raw amino-acid sequence, 72 residues long: Teretoxin Tsu11.2 (72 aa).

Residues Met-1 to Pro-21 form the signal peptide. The propeptide occupies Thr-22–Arg-30.

Belongs to the teretoxin H (TH) superfamily. In terms of processing, contains 4 disulfide bonds. As to expression, expressed by the venom duct.

The protein resides in the secreted. The chain is Teretoxin Tsu11.2 from Terebra subulata (Chocolate spotted auger).